A 432-amino-acid polypeptide reads, in one-letter code: Glutamyl-tRNA reductase (432 aa).

Substrate contacts are provided by residues 49–52 (TCNR), S101, 106–108 (ESQ), and Q112. The Nucleophile role is filled by C50. 181-186 (GAGETI) lines the NADP(+) pocket. The segment at 410 to 432 (KPGYHHPTLQTTIVKTDETDPAS) is disordered.

The protein belongs to the glutamyl-tRNA reductase family. As to quaternary structure, homodimer.

It catalyses the reaction (S)-4-amino-5-oxopentanoate + tRNA(Glu) + NADP(+) = L-glutamyl-tRNA(Glu) + NADPH + H(+). It participates in porphyrin-containing compound metabolism; protoporphyrin-IX biosynthesis; 5-aminolevulinate from L-glutamyl-tRNA(Glu): step 1/2. In terms of biological role, catalyzes the NADPH-dependent reduction of glutamyl-tRNA(Glu) to glutamate 1-semialdehyde (GSA). This Xylella fastidiosa (strain M23) protein is Glutamyl-tRNA reductase.